We begin with the raw amino-acid sequence, 196 residues long: Adenylyl-sulfate kinase (196 aa).

Residue 31 to 38 (GLSGAGKS) participates in ATP binding. The active-site Phosphoserine intermediate is the Ser105.

This sequence belongs to the APS kinase family.

The catalysed reaction is adenosine 5'-phosphosulfate + ATP = 3'-phosphoadenylyl sulfate + ADP + H(+). It functions in the pathway sulfur metabolism; hydrogen sulfide biosynthesis; sulfite from sulfate: step 2/3. Its function is as follows. Catalyzes the synthesis of activated sulfate. The chain is Adenylyl-sulfate kinase (cysC) from Pseudomonas aeruginosa (strain ATCC 15692 / DSM 22644 / CIP 104116 / JCM 14847 / LMG 12228 / 1C / PRS 101 / PAO1).